A 263-amino-acid polypeptide reads, in one-letter code: Endonuclease 8 (263 aa).

Proline 2 functions as the Schiff-base intermediate with DNA in the catalytic mechanism. Glutamate 3 serves as the catalytic Proton donor. Catalysis depends on lysine 53, which acts as the Proton donor; for beta-elimination activity. Residues glutamine 70, arginine 125, and asparagine 169 each coordinate DNA. An FPG-type zinc finger spans residues 229 to 263 (KVFHRDGEPCERCGSIIEKTTLSSRPFYWCPGCQH). Catalysis depends on arginine 253, which acts as the Proton donor; for delta-elimination activity.

This sequence belongs to the FPG family. Requires Zn(2+) as cofactor.

It carries out the reaction 2'-deoxyribonucleotide-(2'-deoxyribose 5'-phosphate)-2'-deoxyribonucleotide-DNA = a 3'-end 2'-deoxyribonucleotide-(2,3-dehydro-2,3-deoxyribose 5'-phosphate)-DNA + a 5'-end 5'-phospho-2'-deoxyribonucleoside-DNA + H(+). Its function is as follows. Involved in base excision repair of DNA damaged by oxidation or by mutagenic agents. Acts as a DNA glycosylase that recognizes and removes damaged bases. Has a preference for oxidized pyrimidines, such as thymine glycol, 5,6-dihydrouracil and 5,6-dihydrothymine. Has AP (apurinic/apyrimidinic) lyase activity and introduces nicks in the DNA strand. Cleaves the DNA backbone by beta-delta elimination to generate a single-strand break at the site of the removed base with both 3'- and 5'-phosphates. This Escherichia coli O9:H4 (strain HS) protein is Endonuclease 8.